The following is a 562-amino-acid chain: Thermosome subunit alpha (562 aa).

2 disordered regions span residues 1 to 23 and 526 to 551; these read MAQQ…TSGE and GGQV…GMGG. Over residues 537–551 the composition is skewed to gly residues; it reads GPAGGPGGMGGGMGG.

It belongs to the TCP-1 chaperonin family. Forms an oligomeric complex of eight-membered rings.

Molecular chaperone; binds unfolded polypeptides in vitro, and has a weak ATPase activity. In Halobacterium salinarum (strain ATCC 700922 / JCM 11081 / NRC-1) (Halobacterium halobium), this protein is Thermosome subunit alpha (thsA).